Reading from the N-terminus, the 95-residue chain is Co-chaperonin GroES (95 aa).

This sequence belongs to the GroES chaperonin family. Heptamer of 7 subunits arranged in a ring. Interacts with the chaperonin GroEL.

The protein localises to the cytoplasm. In terms of biological role, together with the chaperonin GroEL, plays an essential role in assisting protein folding. The GroEL-GroES system forms a nano-cage that allows encapsulation of the non-native substrate proteins and provides a physical environment optimized to promote and accelerate protein folding. GroES binds to the apical surface of the GroEL ring, thereby capping the opening of the GroEL channel. This Beijerinckia indica subsp. indica (strain ATCC 9039 / DSM 1715 / NCIMB 8712) protein is Co-chaperonin GroES.